A 255-amino-acid chain; its full sequence is MQLTNKKIVVTGVSSGIGAETARVLRSHGATVIGVDRNMPSLTLDAFVQADLSHPEGIDKAISQLPEKIDGLCNIAGVPGTADPQLVANVNYLGLKYLTEAVLSRIQPGGSIVNVSSVLGAEWPARLQLHKELGSVVGFSEGQAWLKQNPVAPEFCYQYFKEALIVWSQVQAQEWFMRTSVRMNCIAPGPVFTPILNEFVTMLGQERTQADAHRIKRPAYADEVAAVIAFMCAEESRWINGINIPVDGGLASTYV.

Residues 12–17 (GVSSGI), Asp36, 51–52 (DL), and Gly77 each bind NAD(+). Substrate is bound at residue Ser117. NAD(+)-binding residues include Tyr157 and Lys161. Residue Tyr157 is the Proton acceptor of the active site.

The protein belongs to the short-chain dehydrogenases/reductases (SDR) family.

It catalyses the reaction (E)-coniferol + NADP(+) = (E)-coniferaldehyde + NADPH + H(+). Functionally, catalyzes the conversion of coniferyl alcohol into coniferyl aldehyde in the eugenol degradation pathway. Specific for coniferyl alcohol; does not act on cinnamyl alcohol, 4-coumaryl alcohol or sinapyl alcohol. The chain is Coniferyl-alcohol dehydrogenase (calA) from Pseudomonas sp. (strain HR199 / DSM 7063).